The sequence spans 269 residues: 3-deoxy-manno-octulosonate cytidylyltransferase (269 aa).

This sequence belongs to the KdsB family.

The protein localises to the cytoplasm. It carries out the reaction 3-deoxy-alpha-D-manno-oct-2-ulosonate + CTP = CMP-3-deoxy-beta-D-manno-octulosonate + diphosphate. The protein operates within nucleotide-sugar biosynthesis; CMP-3-deoxy-D-manno-octulosonate biosynthesis; CMP-3-deoxy-D-manno-octulosonate from 3-deoxy-D-manno-octulosonate and CTP: step 1/1. It participates in bacterial outer membrane biogenesis; lipopolysaccharide biosynthesis. In terms of biological role, activates KDO (a required 8-carbon sugar) for incorporation into bacterial lipopolysaccharide in Gram-negative bacteria. The protein is 3-deoxy-manno-octulosonate cytidylyltransferase of Cupriavidus pinatubonensis (strain JMP 134 / LMG 1197) (Cupriavidus necator (strain JMP 134)).